Here is a 319-residue protein sequence, read N- to C-terminus: Aspartate carbamoyltransferase catalytic subunit (319 aa).

Residues R65 and T66 each coordinate carbamoyl phosphate. K93 serves as a coordination point for L-aspartate. Residues R115, H149, and Q152 each coordinate carbamoyl phosphate. The L-aspartate site is built by R182 and R237. Positions 278 and 279 each coordinate carbamoyl phosphate.

Belongs to the aspartate/ornithine carbamoyltransferase superfamily. ATCase family. In terms of assembly, heterododecamer (2C3:3R2) of six catalytic PyrB chains organized as two trimers (C3), and six regulatory PyrI chains organized as three dimers (R2).

It catalyses the reaction carbamoyl phosphate + L-aspartate = N-carbamoyl-L-aspartate + phosphate + H(+). It functions in the pathway pyrimidine metabolism; UMP biosynthesis via de novo pathway; (S)-dihydroorotate from bicarbonate: step 2/3. Catalyzes the condensation of carbamoyl phosphate and aspartate to form carbamoyl aspartate and inorganic phosphate, the committed step in the de novo pyrimidine nucleotide biosynthesis pathway. This chain is Aspartate carbamoyltransferase catalytic subunit, found in Dechloromonas aromatica (strain RCB).